A 331-amino-acid chain; its full sequence is Glucokinase (331 aa).

G16–T21 contacts ATP.

This sequence belongs to the bacterial glucokinase family.

It is found in the cytoplasm. The enzyme catalyses D-glucose + ATP = D-glucose 6-phosphate + ADP + H(+). The sequence is that of Glucokinase from Pseudomonas aeruginosa (strain UCBPP-PA14).